The following is a 314-amino-acid chain: L-lactate dehydrogenase (314 aa).

NAD(+)-binding positions include Val17, Asp38, Lys43, Tyr69, and 83 to 84 (GA). Substrate-binding residues include Gln86 and Arg92. NAD(+) contacts are provided by residues Ser105, 122 to 124 (ASN), and Ser147. Position 124–127 (124–127 (NPVD)) interacts with substrate. 152–155 (DSAR) serves as a coordination point for substrate. 2 residues coordinate beta-D-fructose 1,6-bisphosphate: Arg157 and His172. The active-site Proton acceptor is His179. Tyr223 bears the Phosphotyrosine mark. Thr232 lines the substrate pocket.

The protein belongs to the LDH/MDH superfamily. LDH family. As to quaternary structure, homotetramer.

The protein resides in the cytoplasm. The enzyme catalyses (S)-lactate + NAD(+) = pyruvate + NADH + H(+). It functions in the pathway fermentation; pyruvate fermentation to lactate; (S)-lactate from pyruvate: step 1/1. With respect to regulation, allosterically activated by fructose 1,6-bisphosphate (FBP). Catalyzes the conversion of lactate to pyruvate. This chain is L-lactate dehydrogenase, found in Corynebacterium glutamicum (strain R).